We begin with the raw amino-acid sequence, 380 residues long: N5-carboxyaminoimidazole ribonucleotide synthase (380 aa).

ATP-binding positions include Arg108, Lys148, 153–159 (GYDGKGQ), 183–186 (ESWV), Glu191, His214, and 268–269 (NE). One can recognise an ATP-grasp domain in the interval 112–298 (KKAIQSAGCE…QFEQHIRAVC (187 aa)).

The protein belongs to the PurK/PurT family. As to quaternary structure, homodimer.

It catalyses the reaction 5-amino-1-(5-phospho-beta-D-ribosyl)imidazole + hydrogencarbonate + ATP = 5-carboxyamino-1-(5-phospho-D-ribosyl)imidazole + ADP + phosphate + 2 H(+). It participates in purine metabolism; IMP biosynthesis via de novo pathway; 5-amino-1-(5-phospho-D-ribosyl)imidazole-4-carboxylate from 5-amino-1-(5-phospho-D-ribosyl)imidazole (N5-CAIR route): step 1/2. Functionally, catalyzes the ATP-dependent conversion of 5-aminoimidazole ribonucleotide (AIR) and HCO(3)(-) to N5-carboxyaminoimidazole ribonucleotide (N5-CAIR). This is N5-carboxyaminoimidazole ribonucleotide synthase from Bacillus subtilis (strain 168).